The primary structure comprises 210 residues: Cytochrome c biogenesis ATP-binding export protein CcmA (210 aa).

Residues 4-208 (VPTLSFSKLG…GAIPAQLLEL (205 aa)) form the ABC transporter domain. Residue 39–46 (GANGVGKT) participates in ATP binding.

Belongs to the ABC transporter superfamily. CcmA exporter (TC 3.A.1.107) family. In terms of assembly, the complex is composed of two ATP-binding proteins (CcmA) and two transmembrane proteins (CcmB).

It is found in the cell inner membrane. The catalysed reaction is heme b(in) + ATP + H2O = heme b(out) + ADP + phosphate + H(+). In terms of biological role, part of the ABC transporter complex CcmAB involved in the biogenesis of c-type cytochromes; once thought to export heme, this seems not to be the case, but its exact role is uncertain. Responsible for energy coupling to the transport system. This Albidiferax ferrireducens (strain ATCC BAA-621 / DSM 15236 / T118) (Rhodoferax ferrireducens) protein is Cytochrome c biogenesis ATP-binding export protein CcmA.